The chain runs to 297 residues: tRNA dimethylallyltransferase (297 aa).

9-16 (GPTASGKS) is an ATP binding site. A substrate-binding site is contributed by 11–16 (TASGKS). Interaction with substrate tRNA regions lie at residues 34–37 (DSMQ) and 155–159 (QRVIR).

This sequence belongs to the IPP transferase family. As to quaternary structure, monomer. Requires Mg(2+) as cofactor.

The enzyme catalyses adenosine(37) in tRNA + dimethylallyl diphosphate = N(6)-dimethylallyladenosine(37) in tRNA + diphosphate. Its function is as follows. Catalyzes the transfer of a dimethylallyl group onto the adenine at position 37 in tRNAs that read codons beginning with uridine, leading to the formation of N6-(dimethylallyl)adenosine (i(6)A). The sequence is that of tRNA dimethylallyltransferase from Leuconostoc mesenteroides subsp. mesenteroides (strain ATCC 8293 / DSM 20343 / BCRC 11652 / CCM 1803 / JCM 6124 / NCDO 523 / NBRC 100496 / NCIMB 8023 / NCTC 12954 / NRRL B-1118 / 37Y).